Reading from the N-terminus, the 197-residue chain is ATP-dependent Clp protease proteolytic subunit 3 (197 aa).

The active-site Nucleophile is Ser-96. The active site involves His-121.

It belongs to the peptidase S14 family. Fourteen ClpP subunits assemble into 2 heptameric rings which stack back to back to give a disk-like structure with a central cavity, resembling the structure of eukaryotic proteasomes.

It localises to the cytoplasm. The enzyme catalyses Hydrolysis of proteins to small peptides in the presence of ATP and magnesium. alpha-casein is the usual test substrate. In the absence of ATP, only oligopeptides shorter than five residues are hydrolyzed (such as succinyl-Leu-Tyr-|-NHMec, and Leu-Tyr-Leu-|-Tyr-Trp, in which cleavage of the -Tyr-|-Leu- and -Tyr-|-Trp bonds also occurs).. Its function is as follows. Cleaves peptides in various proteins in a process that requires ATP hydrolysis. Has a chymotrypsin-like activity. Plays a major role in the degradation of misfolded proteins. The protein is ATP-dependent Clp protease proteolytic subunit 3 of Prochlorococcus marinus (strain MIT 9313).